The primary structure comprises 866 residues: Probable beta-glucosidase F (866 aa).

The signal sequence occupies residues 1-20; the sequence is MAAFPAYLALLSYLVPGALS. Residues Asn65, Asn73, and Asn257 are each glycosylated (N-linked (GlcNAc...) asparagine). Asp285 is an active-site residue. N-linked (GlcNAc...) asparagine glycosylation is found at Asn328, Asn360, Asn395, Asn421, Asn474, Asn659, Asn664, and Asn724. The segment at 725-748 is disordered; that stretch reads SSKTYPYPDGYTTEPKPAPRAGGA.

This sequence belongs to the glycosyl hydrolase 3 family.

It is found in the secreted. It catalyses the reaction Hydrolysis of terminal, non-reducing beta-D-glucosyl residues with release of beta-D-glucose.. Its pathway is glycan metabolism; cellulose degradation. Functionally, beta-glucosidases are one of a number of cellulolytic enzymes involved in the degradation of cellulosic biomass. Catalyzes the last step releasing glucose from the inhibitory cellobiose. The protein is Probable beta-glucosidase F (bglF) of Aspergillus flavus (strain ATCC 200026 / FGSC A1120 / IAM 13836 / NRRL 3357 / JCM 12722 / SRRC 167).